Here is a 392-residue protein sequence, read N- to C-terminus: ATP phosphoribosyltransferase regulatory subunit (392 aa).

It belongs to the class-II aminoacyl-tRNA synthetase family. HisZ subfamily. As to quaternary structure, heteromultimer composed of HisG and HisZ subunits.

Its subcellular location is the cytoplasm. It participates in amino-acid biosynthesis; L-histidine biosynthesis; L-histidine from 5-phospho-alpha-D-ribose 1-diphosphate: step 1/9. In terms of biological role, required for the first step of histidine biosynthesis. May allow the feedback regulation of ATP phosphoribosyltransferase activity by histidine. In Gloeobacter violaceus (strain ATCC 29082 / PCC 7421), this protein is ATP phosphoribosyltransferase regulatory subunit.